Here is a 350-residue protein sequence, read N- to C-terminus: Protein O-mannose kinase (350 aa).

An N-acetylmethionine modification is found at Met-1. The Cytoplasmic portion of the chain corresponds to 1-20 (MEKQPQNKRRGLAPREVPPA). Residues 21-43 (VGLLLIMALMNTLLYLCLDHFFI) traverse the membrane as a helical; Signal-anchor for type II membrane protein segment. Topologically, residues 44 to 350 (APRQSIVDPR…AVMSQAREML (307 aa)) are lumenal. Residues 81–350 (VRQLKRVGEG…AVMSQAREML (270 aa)) enclose the Protein kinase domain. N-linked (GlcNAc...) asparagine glycans are attached at residues Asn-165, Asn-220, and Asn-235.

It belongs to the protein kinase superfamily. Ser/Thr protein kinase family. STKL subfamily.

It localises to the endoplasmic reticulum membrane. The catalysed reaction is 3-O-[beta-D-GalNAc-(1-&gt;3)-beta-D-GlcNAc-(1-&gt;4)-alpha-D-Man]-L-Thr-[protein] + ATP = 3-O-[beta-D-GalNAc-(1-&gt;3)-beta-D-GlcNAc-(1-&gt;4)-(O-6-P-alpha-D-Man)]-Thr-[protein] + ADP + H(+). Its function is as follows. Protein O-mannose kinase that specifically mediates phosphorylation at the 6-position of an O-mannose of the trisaccharide (N-acetylgalactosamine (GalNAc)-beta-1,3-N-acetylglucosamine (GlcNAc)-beta-1,4-mannose) to generate phosphorylated O-mannosyl trisaccharide (N-acetylgalactosamine-beta-1,3-N-acetylglucosamine-beta-1,4-(phosphate-6-)mannose). Phosphorylated O-mannosyl trisaccharide is a carbohydrate structure present in alpha-dystroglycan (DAG1), which is required for binding laminin G-like domain-containing extracellular proteins with high affinity. Only shows kinase activity when the GalNAc-beta-3-GlcNAc-beta-terminus is linked to the 4-position of O-mannose, suggesting that this disaccharide serves as the substrate recognition motif. This is Protein O-mannose kinase (POMK) from Macaca fascicularis (Crab-eating macaque).